The following is a 104-amino-acid chain: Guanyl-specific ribonuclease Ap1 (104 aa).

Disulfide bonds link cysteine 2/cysteine 10 and cysteine 6/cysteine 103. Histidine 40 is a catalytic residue. Glutamate 58 serves as the catalytic Proton acceptor. The active-site Proton donor is histidine 92.

It belongs to the ribonuclease N1/T1 family.

It localises to the secreted. It catalyses the reaction [RNA] containing guanosine + H2O = an [RNA fragment]-3'-guanosine-3'-phosphate + a 5'-hydroxy-ribonucleotide-3'-[RNA fragment].. This Aspergillus pallidus protein is Guanyl-specific ribonuclease Ap1.